Consider the following 351-residue polypeptide: tRNA-specific 2-thiouridylase MnmA (351 aa).

Residue Ala-6 to Ser-13 coordinates ATP. The active-site Nucleophile is the Cys-96. Cys-96 and Cys-193 form a disulfide bridge. ATP is bound at residue Gly-120. An interaction with tRNA region spans residues Lys-143–Gln-145. The active-site Cysteine persulfide intermediate is the Cys-193. Residues Arg-298–Tyr-299 are interaction with tRNA.

It belongs to the MnmA/TRMU family.

The protein localises to the cytoplasm. The enzyme catalyses S-sulfanyl-L-cysteinyl-[protein] + uridine(34) in tRNA + AH2 + ATP = 2-thiouridine(34) in tRNA + L-cysteinyl-[protein] + A + AMP + diphosphate + H(+). Functionally, catalyzes the 2-thiolation of uridine at the wobble position (U34) of tRNA, leading to the formation of s(2)U34. This is tRNA-specific 2-thiouridylase MnmA from Nitratidesulfovibrio vulgaris (strain DSM 19637 / Miyazaki F) (Desulfovibrio vulgaris).